We begin with the raw amino-acid sequence, 354 residues long: Biotin synthase (354 aa).

In terms of domain architecture, Radical SAM core spans 64–282 (GDVELATLLS…IAVARITMPR (219 aa)). [4Fe-4S] cluster contacts are provided by Cys-79, Cys-83, and Cys-86. [2Fe-2S] cluster-binding residues include Cys-123, Cys-154, Cys-214, and Arg-286.

This sequence belongs to the radical SAM superfamily. Biotin synthase family. Homodimer. Requires [4Fe-4S] cluster as cofactor. [2Fe-2S] cluster serves as cofactor.

It catalyses the reaction (4R,5S)-dethiobiotin + (sulfur carrier)-SH + 2 reduced [2Fe-2S]-[ferredoxin] + 2 S-adenosyl-L-methionine = (sulfur carrier)-H + biotin + 2 5'-deoxyadenosine + 2 L-methionine + 2 oxidized [2Fe-2S]-[ferredoxin]. Its pathway is cofactor biosynthesis; biotin biosynthesis; biotin from 7,8-diaminononanoate: step 2/2. In terms of biological role, catalyzes the conversion of dethiobiotin (DTB) to biotin by the insertion of a sulfur atom into dethiobiotin via a radical-based mechanism. In Paracidovorax citrulli (strain AAC00-1) (Acidovorax citrulli), this protein is Biotin synthase.